Reading from the N-terminus, the 157-residue chain is MADKGERAIKVVAENRKARFNYAIEDTVEAGIALTGTEVKSIRNGKTTIAESYADSKNGEIWLINSNIPEYLQANRFNHEPKRPRKLLLHRKQINKLMGAVDREGMTLIPLKLYFNERGRAKLLLAIAKGKKLHDKRESEKKRDWGREKGRLLRARG.

A disordered region spans residues 133–157 (LHDKRESEKKRDWGREKGRLLRARG). Over residues 135 to 151 (DKRESEKKRDWGREKGR) the composition is skewed to basic and acidic residues.

This sequence belongs to the SmpB family.

The protein resides in the cytoplasm. Its function is as follows. Required for rescue of stalled ribosomes mediated by trans-translation. Binds to transfer-messenger RNA (tmRNA), required for stable association of tmRNA with ribosomes. tmRNA and SmpB together mimic tRNA shape, replacing the anticodon stem-loop with SmpB. tmRNA is encoded by the ssrA gene; the 2 termini fold to resemble tRNA(Ala) and it encodes a 'tag peptide', a short internal open reading frame. During trans-translation Ala-aminoacylated tmRNA acts like a tRNA, entering the A-site of stalled ribosomes, displacing the stalled mRNA. The ribosome then switches to translate the ORF on the tmRNA; the nascent peptide is terminated with the 'tag peptide' encoded by the tmRNA and targeted for degradation. The ribosome is freed to recommence translation, which seems to be the essential function of trans-translation. The chain is SsrA-binding protein from Nitrobacter winogradskyi (strain ATCC 25391 / DSM 10237 / CIP 104748 / NCIMB 11846 / Nb-255).